A 250-amino-acid chain; its full sequence is Probable aquaporin TIP2-2 (250 aa).

Position 1 is an N-acetylmethionine (M1). The Cytoplasmic segment spans residues 1–24 (MVKIEIGSVGDSFSVASLKAYLSE). The residue at position 3 (K3) is an N6,N6-dimethyllysine. Residues 25-45 (FIATLLFVFAGVGSALAFAKL) form a helical membrane-spanning segment. Residues 46–53 (TSDAALDP) lie on the Vacuolar side of the membrane. A helical membrane pass occupies residues 54-74 (AGLVAVAVAHAFALFVGVSIA). The Cytoplasmic segment spans residues 75–101 (ANISGGHLNPAVTLGLAVGGNITVITG). Positions 83 to 85 (NPA) match the NPA 1 motif. Residues 102 to 122 (FFYWIAQCLGSIVACLLLVFV) traverse the membrane as a helical segment. The Vacuolar portion of the chain corresponds to 123 to 133 (TNGESVPTHGV). The chain crosses the membrane as a helical span at residues 134–154 (AAGLGAIEGVVMEIVVTFALV). The Cytoplasmic portion of the chain corresponds to 155–168 (YTVYATAADPKKGS). A helical transmembrane segment spans residues 169–189 (LGTIAPIAIGFIVGANILAAG). Over 190-210 (PFSGGSMNPARSFGPAVVSGD) the chain is Vacuolar. The NPA 2 signature appears at 197-199 (NPA). The chain crosses the membrane as a helical span at residues 211 to 231 (FSQIWIYWVGPLVGGALAGLI). At 232–250 (YGDVFIGSYAPAPTTESYP) the chain is on the cytoplasmic side. S248 is modified (phosphoserine).

This sequence belongs to the MIP/aquaporin (TC 1.A.8) family. TIP (TC 1.A.8.10) subfamily. As to quaternary structure, interacts with cucumber mosaic virus (CMV) Protein 1a. In terms of tissue distribution, expressed above groung and in roots.

Its subcellular location is the vacuole membrane. In terms of biological role, aquaporins facilitate the transport of water and small neutral solutes across cell membranes. The protein is Probable aquaporin TIP2-2 (TIP2-2) of Arabidopsis thaliana (Mouse-ear cress).